Reading from the N-terminus, the 433-residue chain is Glutamate-1-semialdehyde 2,1-aminomutase (433 aa).

K266 carries the N6-(pyridoxal phosphate)lysine modification.

Belongs to the class-III pyridoxal-phosphate-dependent aminotransferase family. HemL subfamily. In terms of assembly, homodimer. Requires pyridoxal 5'-phosphate as cofactor.

The protein localises to the cytoplasm. It catalyses the reaction (S)-4-amino-5-oxopentanoate = 5-aminolevulinate. The protein operates within porphyrin-containing compound metabolism; protoporphyrin-IX biosynthesis; 5-aminolevulinate from L-glutamyl-tRNA(Glu): step 2/2. This chain is Glutamate-1-semialdehyde 2,1-aminomutase, found in Psychrobacter arcticus (strain DSM 17307 / VKM B-2377 / 273-4).